Here is a 262-residue protein sequence, read N- to C-terminus: R3H domain-containing protein 4 (262 aa).

2 disordered regions span residues 1–27 and 132–155; these read MVAL…PGCL and YLED…RRED. Residues 146-155 show a composition bias toward basic and acidic residues; it reads GRGEDRRRED. An R3H domain is found at 182–245; the sequence is METLESWEER…RRQMKVSNRH (64 aa).

The protein resides in the nucleus. The polypeptide is R3H domain-containing protein 4 (R3hdm4) (Mus musculus (Mouse)).